We begin with the raw amino-acid sequence, 436 residues long: Histidine--tRNA ligase (436 aa).

Belongs to the class-II aminoacyl-tRNA synthetase family.

The protein localises to the cytoplasm. It carries out the reaction tRNA(His) + L-histidine + ATP = L-histidyl-tRNA(His) + AMP + diphosphate + H(+). This is Histidine--tRNA ligase from Thermococcus kodakarensis (strain ATCC BAA-918 / JCM 12380 / KOD1) (Pyrococcus kodakaraensis (strain KOD1)).